A 253-amino-acid polypeptide reads, in one-letter code: tRNA uridine(34) hydroxylase (253 aa).

The 95-residue stretch at His127–Tyr221 folds into the Rhodanese domain. The Cysteine persulfide intermediate role is filled by Cys181.

The protein belongs to the TrhO family.

The catalysed reaction is uridine(34) in tRNA + AH2 + O2 = 5-hydroxyuridine(34) in tRNA + A + H2O. In terms of biological role, catalyzes oxygen-dependent 5-hydroxyuridine (ho5U) modification at position 34 in tRNAs. This is tRNA uridine(34) hydroxylase from Xanthomonas campestris pv. campestris (strain 8004).